Here is a 113-residue protein sequence, read N- to C-terminus: Con-Ins G3b (113 aa).

An N-terminal signal peptide occupies residues 1–21 (MTTSFYFLLVALGLLLYVCQS). Positions 22–29 (SFGNQHTR) are excised as a propeptide. Proline 34 carries the post-translational modification 4-hydroxyproline; partial. 3 disulfides stabilise this stretch: cysteine 38–cysteine 99, cysteine 50–cysteine 112, and cysteine 98–cysteine 103. Glutamate 41 carries the post-translational modification 4-carboxyglutamate. Histidine 51 is subject to Histidine amide. Positions 52–92 (GKRNDAGKKRGRASPLWQRQGFLSMLKAKRNEAFFLQRDGR) are cleaved as a propeptide — c peptide. Residue glutamate 96 is modified to 4-carboxyglutamate. Proline 102 is modified (4-hydroxyproline; partial).

The protein belongs to the insulin family. In terms of assembly, heterodimer of A and B chains; disulfide-linked. It is noteworthy that in this dimer, in contrast to Con-Ins G1, the chain B is amidated and not the chain A. Expressed by the venom gland.

It localises to the secreted. Its function is as follows. This venom insulin, from a fish-hunting cone snail, facilitates prey capture by rapidly inducing hypoglycemic shock. It is one of the smallest known insulin found in nature and lacks the C-terminal segment of the B chain that, in human insulin, mediates engagement of the insulin receptor (INSR) and assembly of the hormone's hexameric storage form. Despite lacking this segment, it both binds and activates human insulin receptor (long isoform (HIR-B)) with only a 10-fold lower potency. In vivo, intraperitoneal injection of this peptide into zebrafish lowers blood glucose with the same potency than human insulin. In addition, when applied to water, this peptide reduces overall locomotor activity of zebrafish larvae, observed as a significant decrease in the percentage of time spent swimming and movement frequency. The chain is Con-Ins G3b from Conus geographus (Geography cone).